The following is a 318-amino-acid chain: Porphobilinogen deaminase (318 aa).

C241 carries the post-translational modification S-(dipyrrolylmethanemethyl)cysteine.

The protein belongs to the HMBS family. Monomer. Requires dipyrromethane as cofactor.

It carries out the reaction 4 porphobilinogen + H2O = hydroxymethylbilane + 4 NH4(+). The protein operates within porphyrin-containing compound metabolism; protoporphyrin-IX biosynthesis; coproporphyrinogen-III from 5-aminolevulinate: step 2/4. Tetrapolymerization of the monopyrrole PBG into the hydroxymethylbilane pre-uroporphyrinogen in several discrete steps. The sequence is that of Porphobilinogen deaminase from Geobacter sp. (strain M21).